A 194-amino-acid chain; its full sequence is Putative manganese efflux pump MntP (194 aa).

A run of 6 helical transmembrane segments spans residues 3–23, 37–57, 65–85, 112–132, 137–157, and 170–190; these read PITTLLIGIAMSTDAFAAAIG, LYVAVIFGVIETATPIAGWLL, IATFDHWIAFGLLGGLGIHMI, LAATALATSIDAAAIGISMAF, IGIVAAVIGLCTFTMVIFGVM, and AEIVGGIILIIVGSTILYEHL.

The protein belongs to the MntP (TC 9.B.29) family.

The protein resides in the cell inner membrane. Probably functions as a manganese efflux pump. The polypeptide is Putative manganese efflux pump MntP (Xylella fastidiosa (strain M23)).